The chain runs to 205 residues: D-alanine--D-alanine ligase (205 aa).

The ATP-grasp domain maps to 111 to 205 (KHVLKSLGID…LGRAIGTMEF (95 aa)). Residue 139–190 (MPYPFVIKPICGGSTIGVHAIFSRSEYLDLSVHADALEGRMLVEEYIPGQEV) coordinates ATP.

This sequence belongs to the D-alanine--D-alanine ligase family. Requires Mg(2+) as cofactor. The cofactor is Mn(2+).

The protein resides in the cytoplasm. It carries out the reaction 2 D-alanine + ATP = D-alanyl-D-alanine + ADP + phosphate + H(+). Its pathway is cell wall biogenesis; peptidoglycan biosynthesis. Cell wall formation. The protein is D-alanine--D-alanine ligase (ddl) of Anaplasma centrale.